A 314-amino-acid chain; its full sequence is Hydroxyacyl-coenzyme A dehydrogenase, mitochondrial (314 aa).

Residues 1 to 12 constitute a mitochondrion transit peptide; the sequence is MAFATRQLVRSL. NAD(+) contacts are provided by residues 34 to 39 and Asp57; that span reads GGGLMG. Positions 73 and 80 each coordinate CoA. Lys80 bears the N6-succinyllysine mark. N6-acetyllysine; alternate occurs at positions 81 and 87. An N6-succinyllysine; alternate mark is found at Lys81 and Lys87. Glu122 contributes to the NAD(+) binding site. N6-acetyllysine is present on Lys125. Residue Lys127 participates in NAD(+) binding. Lys127 carries the N6-(2-hydroxyisobutyryl)lysine modification. The residue at position 136 (Lys136) is an N6-acetyllysine; alternate. An N6-succinyllysine; alternate modification is found at Lys136. Positions 149 and 173 each coordinate NAD(+). Ser149 serves as a coordination point for CoA. At Lys179 the chain carries N6-acetyllysine. An N6-acetyllysine; alternate mark is found at Lys185, Lys192, and Lys202. Lys185, Lys192, and Lys202 each carry N6-succinyllysine; alternate. N6-succinyllysine is present on Lys206. N6-acetyllysine; alternate occurs at positions 212 and 241. 2 positions are modified to N6-succinyllysine; alternate: Lys212 and Lys241. Residue Lys305 participates in NAD(+) binding. Lys312 is modified (N6-acetyllysine; alternate). Lys312 is subject to N6-succinyllysine; alternate.

This sequence belongs to the 3-hydroxyacyl-CoA dehydrogenase family. Homodimer. Interacts with GLUD1; this interaction inhibits the activation of glutamate dehydrogenase 1 (GLUD1). In terms of processing, succinylation at Lys-81, adjacent to a coenzyme A binding site. Desuccinylated by SIRT5.

Its subcellular location is the mitochondrion matrix. It catalyses the reaction a (3S)-3-hydroxyacyl-CoA + NAD(+) = a 3-oxoacyl-CoA + NADH + H(+). The catalysed reaction is (3S)-3-hydroxybutanoyl-CoA + NAD(+) = acetoacetyl-CoA + NADH + H(+). It carries out the reaction (3S)-hydroxydecanoyl-CoA + NAD(+) = 3-oxodecanoyl-CoA + NADH + H(+). The enzyme catalyses (3S)-hydroxyhexadecanoyl-CoA + NAD(+) = 3-oxohexadecanoyl-CoA + NADH + H(+). It functions in the pathway lipid metabolism; fatty acid beta-oxidation. Mitochondrial fatty acid beta-oxidation enzyme that catalyzes the third step of the beta-oxidation cycle for medium and short-chain 3-hydroxy fatty acyl-CoAs (C4 to C10). Plays a role in the control of insulin secretion by inhibiting the activation of glutamate dehydrogenase 1 (GLUD1), an enzyme that has an important role in regulating amino acid-induced insulin secretion. Plays a role in the maintenance of normal spermatogenesis through the reduction of fatty acid accumulation in the testes. In Sus scrofa (Pig), this protein is Hydroxyacyl-coenzyme A dehydrogenase, mitochondrial (HADH).